A 294-amino-acid polypeptide reads, in one-letter code: Mitochondrial glycine transporter (294 aa).

3 Solcar repeats span residues 5 to 84, 102 to 186, and 208 to 292; these read RRAT…IRQA, LNMY…MKVL, and ASTL…IVKK. The next 6 helical transmembrane spans lie at 11-36, 59-85, 108-133, 161-184, 212-238, and 267-285; these read LIGG…TRLQ, GALP…RQAI, MFSG…VRYE, GFGA…DRMK, INGS…KTRM, and GISL…AWGI.

The protein belongs to the mitochondrial carrier (TC 2.A.29) family. SLC25A38 subfamily.

The protein resides in the mitochondrion inner membrane. The enzyme catalyses glycine(in) = glycine(out). Its function is as follows. Mitochondrial glycine transporter that imports glycine into the mitochondrial matrix. Plays an important role in providing glycine for the first enzymatic step in heme biosynthesis, the condensation of glycine with succinyl-CoA to produce 5-aminolevulinate (ALA) in the mitochondrial matrix. The protein is Mitochondrial glycine transporter of Kluyveromyces lactis (strain ATCC 8585 / CBS 2359 / DSM 70799 / NBRC 1267 / NRRL Y-1140 / WM37) (Yeast).